A 617-amino-acid polypeptide reads, in one-letter code: Guanylate cyclase soluble subunit beta-2 (617 aa).

Position 26 (His26) interacts with heme. The Guanylate cyclase domain occupies 391–519 (TILFSDVVTF…DTVNTASRME (129 aa)). Over residues 577–586 (RSKTPVDHKG) the composition is skewed to basic and acidic residues. The interval 577–605 (RSKTPVDHKGSTQKASLPTTKLQGSVQPS) is disordered. The segment covering 588 to 604 (TQKASLPTTKLQGSVQP) has biased composition (polar residues).

Belongs to the adenylyl cyclase class-4/guanylyl cyclase family. In terms of assembly, heterodimer of an alpha and a beta chain. Heme is required as a cofactor. As to expression, expressed in gastric signet ring cell carcinoma, but not in the normal stomach.

It localises to the cytoplasm. The catalysed reaction is GTP = 3',5'-cyclic GMP + diphosphate. With respect to regulation, activated by nitric oxide in the presence of magnesium or manganese ions. The chain is Guanylate cyclase soluble subunit beta-2 (GUCY1B2) from Homo sapiens (Human).